A 151-amino-acid polypeptide reads, in one-letter code: UPF0756 membrane protein GTNG_2661 (151 aa).

4 consecutive transmembrane segments (helical) span residues valine 5–isoleucine 25, tryptophan 53–phenylalanine 73, tryptophan 86–leucine 106, and leucine 116–isoleucine 136.

It belongs to the UPF0756 family.

The protein localises to the cell membrane. This chain is UPF0756 membrane protein GTNG_2661, found in Geobacillus thermodenitrificans (strain NG80-2).